The chain runs to 500 residues: MRNWLVLLCPCVLGAALHLWLRLRSPPPACASGAGPADQLALFPQWKSTHYDVVVGVLSARNNHELRNVIRSTWMRHLLQHPTLSQRVLVKFIIGAHGCEVPVEDREDPYSCKLLNITNPVLNQEIEAFSLSEDTSSGLPEDRVVSVSFRVLYPIVITSLGVFYDANDVGFQRNITVKLYQAEQEEALFIARFSPPSCGVQVNKLWYKPVEQFILPESFEGTIVWESQDLHGLVSRNLHKVTVNDGGGVLRVITAGEGALPHEFLEGVEGVAGGFIYTIQEGDALLHNLHSRPQRLIDHIRNLHEEDALLKEESSIYDDIVFVDVVDTYRNVPAKLLNFYRWTVETTSFNLLLKTDDDCYIDLEAVFNRIVQKNLDGPNFWWGNFRLNWAVDRTGKWQELEYPSPAYPAFACGSGYVISKDIVKWLASNSGRLKTYQGEDVSMGIWMAAIGPKRYQDSLWLCEKTCETGMLSSPQYSPWELTELWKLKERCGDPCRCQAR.

Topologically, residues 1–6 are cytoplasmic; sequence MRNWLV. Residues 7–23 traverse the membrane as a helical; Signal-anchor for type II membrane protein segment; that stretch reads LLCPCVLGAALHLWLRL. The Lumenal portion of the chain corresponds to 24–500; the sequence is RSPPPACASG…CGDPCRCQAR (477 aa). Asn116 and Asn174 each carry an N-linked (GlcNAc...) asparagine glycan.

This sequence belongs to the glycosyltransferase 31 family. Post-translationally, N-glycosylated. Expressed in all tissues examined, but at highest levels in testis, adipose tissue, skeletal muscle and ovary.

It localises to the golgi apparatus membrane. The protein resides in the endoplasmic reticulum. The enzyme catalyses 3-O-(N-acetyl-beta-D-glucosaminyl-(1-&gt;4)-alpha-D-mannosyl)-L-threonyl-[protein] + UDP-N-acetyl-alpha-D-galactosamine = 3-O-[beta-D-GalNAc-(1-&gt;3)-beta-D-GlcNAc-(1-&gt;4)-alpha-D-Man]-L-Thr-[protein] + UDP + H(+). It participates in protein modification; protein glycosylation. In terms of biological role, beta-1,3-N-acetylgalactosaminyltransferase that synthesizes a unique carbohydrate structure, GalNAc-beta-1-3GlcNAc, on N- and O-glycans. Has no galactose nor galactosaminyl transferase activity toward any acceptor substrate. Involved in alpha-dystroglycan (DAG1) glycosylation: acts coordinately with GTDC2/POMGnT2 to synthesize a GalNAc-beta3-GlcNAc-beta-terminus at the 4-position of protein O-mannose in the biosynthesis of the phosphorylated O-mannosyl trisaccharide (N-acetylgalactosamine-beta-3-N-acetylglucosamine-beta-4-(phosphate-6-)mannose), a carbohydrate structure present in alpha-dystroglycan, which is required for binding laminin G-like domain-containing extracellular proteins with high affinity. The chain is UDP-GalNAc:beta-1,3-N-acetylgalactosaminyltransferase 2 (B3GALNT2) from Homo sapiens (Human).